Consider the following 193-residue polypeptide: DNA damage-inducible transcript 4-like protein (193 aa).

The protein belongs to the DDIT4 family. As to expression, expressed in heart, skeletal muscle and testis.

The protein localises to the cytoplasm. Its function is as follows. Inhibits cell growth by regulating the TOR signaling pathway upstream of the TSC1-TSC2 complex and downstream of AKT1. The sequence is that of DNA damage-inducible transcript 4-like protein (Ddit4l) from Rattus norvegicus (Rat).